The following is a 157-amino-acid chain: Endoribonuclease YbeY (157 aa).

Zn(2+) contacts are provided by His-114, His-118, and His-124.

It belongs to the endoribonuclease YbeY family. Zn(2+) is required as a cofactor.

It localises to the cytoplasm. Its function is as follows. Single strand-specific metallo-endoribonuclease involved in late-stage 70S ribosome quality control and in maturation of the 3' terminus of the 16S rRNA. The sequence is that of Endoribonuclease YbeY from Edwardsiella ictaluri (strain 93-146).